Reading from the N-terminus, the 289-residue chain is 4-hydroxy-tetrahydrodipicolinate synthase (289 aa).

Threonine 46 contributes to the pyruvate binding site. Catalysis depends on tyrosine 134, which acts as the Proton donor/acceptor. The Schiff-base intermediate with substrate role is filled by lysine 162. Valine 204 serves as a coordination point for pyruvate.

Belongs to the DapA family. Homotetramer; dimer of dimers.

Its subcellular location is the cytoplasm. It carries out the reaction L-aspartate 4-semialdehyde + pyruvate = (2S,4S)-4-hydroxy-2,3,4,5-tetrahydrodipicolinate + H2O + H(+). The protein operates within amino-acid biosynthesis; L-lysine biosynthesis via DAP pathway; (S)-tetrahydrodipicolinate from L-aspartate: step 3/4. Its function is as follows. Catalyzes the condensation of (S)-aspartate-beta-semialdehyde [(S)-ASA] and pyruvate to 4-hydroxy-tetrahydrodipicolinate (HTPA). This is 4-hydroxy-tetrahydrodipicolinate synthase from Bacillus velezensis (strain DSM 23117 / BGSC 10A6 / LMG 26770 / FZB42) (Bacillus amyloliquefaciens subsp. plantarum).